Reading from the N-terminus, the 185-residue chain is Large ribosomal subunit protein uL5 (185 aa).

The protein belongs to the universal ribosomal protein uL5 family. As to quaternary structure, part of the 50S ribosomal subunit; part of the 5S rRNA/L5/L18/L25 subcomplex. Contacts the 5S rRNA and the P site tRNA. Forms a bridge to the 30S subunit in the 70S ribosome.

Functionally, this is one of the proteins that bind and probably mediate the attachment of the 5S RNA into the large ribosomal subunit, where it forms part of the central protuberance. In the 70S ribosome it contacts protein S13 of the 30S subunit (bridge B1b), connecting the 2 subunits; this bridge is implicated in subunit movement. Contacts the P site tRNA; the 5S rRNA and some of its associated proteins might help stabilize positioning of ribosome-bound tRNAs. This chain is Large ribosomal subunit protein uL5, found in Bradyrhizobium sp. (strain ORS 278).